The chain runs to 318 residues: uncharacterized protein (318 aa).

It belongs to the glycosyltransferase 2 family.

This is an uncharacterized protein from Rickettsia typhi (strain ATCC VR-144 / Wilmington).